A 474-amino-acid polypeptide reads, in one-letter code: Semenogelin-2 (474 aa).

The signal sequence occupies residues 1-23 (MKSIILFVLSLLLILEKQAAVMG). Disordered regions lie at residues 24–62 (QKGG…SKGS), 132–158 (GGQA…LSSQ), 173–194 (KEQA…QSSY), 226–247 (VREE…DRLQ), and 272–474 (NLNQ…SSTE). 3 stretches are compositionally biased toward polar residues: residues 31 to 40 (QLPSGSSQFP), 137 to 158 (RGTQ…LSSQ), and 174 to 194 (EQAS…QSSY). Residues 292-310 (RTEERQLNHGEKSVQKDVS) are compositionally biased toward basic and acidic residues. Over residues 325–334 (KSQNQVTIHS) the composition is skewed to polar residues. Over residues 335–346 (QDQEHGHKENKM) the composition is skewed to basic and acidic residues. Residues 372–397 (GSISIQTEEQIHGKSQNQVRIPSQAQ) are compositionally biased toward polar residues. Positions 399-426 (YGHKENKISYRSSSTEERRLNSGEKDVQ) are enriched in basic and acidic residues. Residues 445–455 (KSQNQVTIPSQ) are compositionally biased toward polar residues. A compositionally biased stretch (basic and acidic residues) spans 456–465 (DQEHGHKENK).

The protein belongs to the semenogelin family. Interacts with SERPINA5.

The protein resides in the secreted. In terms of biological role, participates in the formation of a gel matrix (sperm coagulum) entrapping the accessory gland secretions and ejaculated spermatozoa. The protein is Semenogelin-2 (SEMG2) of Gorilla gorilla gorilla (Western lowland gorilla).